A 306-amino-acid chain; its full sequence is UDP-N-acetylenolpyruvoylglucosamine reductase (306 aa).

In terms of domain architecture, FAD-binding PCMH-type spans 28–194 (KIGNISKLFL…LKTELNLKKE (167 aa)). The Proton donor role is filled by S223. Residue E295 is part of the active site.

Belongs to the MurB family. FAD serves as cofactor.

It localises to the cytoplasm. The catalysed reaction is UDP-N-acetyl-alpha-D-muramate + NADP(+) = UDP-N-acetyl-3-O-(1-carboxyvinyl)-alpha-D-glucosamine + NADPH + H(+). The protein operates within cell wall biogenesis; peptidoglycan biosynthesis. In terms of biological role, cell wall formation. In Borrelia garinii subsp. bavariensis (strain ATCC BAA-2496 / DSM 23469 / PBi) (Borreliella bavariensis), this protein is UDP-N-acetylenolpyruvoylglucosamine reductase.